The primary structure comprises 1901 residues: Protein TIC 214 (1901 aa).

A run of 6 helical transmembrane segments spans residues 18-38 (IINS…FSIG), 64-84 (FITG…HLAL), 87-107 (PHTI…WNNH), 124-144 (LSIQ…HFIL), 172-192 (VGWL…LVWI), and 221-241 (IFSI…PSPI). Disordered stretches follow at residues 248 to 299 (EASK…EERW), 797 to 817 (REEQ…ENKR), and 1591 to 1618 (IQEA…LGPV). Residues 256 to 268 (VESEEERDVEIET) are compositionally biased toward acidic residues. Residues 1591 to 1611 (IQEAKEPASQGEKERGSDIEN) are compositionally biased toward basic and acidic residues.

Belongs to the TIC214 family. In terms of assembly, part of the Tic complex.

The protein resides in the plastid. The protein localises to the chloroplast inner membrane. In terms of biological role, involved in protein precursor import into chloroplasts. May be part of an intermediate translocation complex acting as a protein-conducting channel at the inner envelope. In Nicotiana sylvestris (Wood tobacco), this protein is Protein TIC 214.